The following is a 924-amino-acid chain: Periplasmic nitrate reductase (924 aa).

Residues 1 to 30 (MNRRDFIKNTAIASAASVAGLSVPSSMLGA) constitute a signal peptide (tat-type signal). One can recognise a 4Fe-4S Mo/W bis-MGD-type domain in the interval 35-91 (WKWDKAVCRFCGTGCGIMIARKDGKIVATKGDPAAPVNRGLNCIKGYFNAKIMYGED). Residues cysteine 42, cysteine 45, cysteine 49, and cysteine 77 each contribute to the [4Fe-4S] cluster site. Residues lysine 79, glutamine 147, asparagine 172, cysteine 176, 209–216 (WGANMAEM), methionine 417, glutamine 421, asparagine 527, 552–553 (SD), lysine 575, aspartate 602, and 814–823 (TGRVLEHWHS) contribute to the Mo-bis(molybdopterin guanine dinucleotide) site. Position 890 (tryptophan 890) interacts with substrate. The Mo-bis(molybdopterin guanine dinucleotide) site is built by asparagine 898 and lysine 915.

Belongs to the prokaryotic molybdopterin-containing oxidoreductase family. NasA/NapA/NarB subfamily. As to quaternary structure, component of the periplasmic nitrate reductase NapAB complex composed of NapA and NapB. The cofactor is [4Fe-4S] cluster. Requires Mo-bis(molybdopterin guanine dinucleotide) as cofactor. In terms of processing, predicted to be exported by the Tat system. The position of the signal peptide cleavage has not been experimentally proven.

It localises to the periplasm. It catalyses the reaction 2 Fe(II)-[cytochrome] + nitrate + 2 H(+) = 2 Fe(III)-[cytochrome] + nitrite + H2O. Functionally, catalytic subunit of the periplasmic nitrate reductase complex NapAB. Receives electrons from NapB and catalyzes the reduction of nitrate to nitrite. This Campylobacter jejuni subsp. jejuni serotype O:6 (strain 81116 / NCTC 11828) protein is Periplasmic nitrate reductase.